Reading from the N-terminus, the 1027-residue chain is MIRQCRAGLRLCRALYQTSYRWHGKSACERALRYAPGESIHGFTVNEVTPVPELFLTAVKLSHDNTGAKYLHVAREDSNNLFSVQFRTTPLDSTGVPHILEHTVLCGSQKYPCRDPFFKMLNRSLSTFMNAFTASDYTMYPFSTQNAKDFQNLLSVYLDAVFFPCLRELDFWQEGWRLEHENPEDPNSPLIFKGIVFNEMKGAFTDNEKVFSQHLQNKLLPDHTYSVVSGGEPLNIPDLTWEQLKQFHATHYHPSNARFFTYGNLPLEIHLKQIHEDALSKFERIDPKTSVPPQERWQSPREYSISCGTDSFASDPEKQTTVSVNFLLSEITDTFEAFTLSLLSSLMVDGPNSPFYKALIEANLGTDFSPDTGFNNYTRETYFSIGLQGINKEDSEKVKAIINKTINEVAEHGIEAERIEALLHKLEIQMKHQSTSFGLTLASYVASCWNHEGDPVDLLKIGDKISRFRECLKENPKFLQDKVKQYFQVSQHRMTLSMSPDEQHYDKEAQLEAEKLTQKVKALSEEERKQIYEKGLELIRLQSKPQDASCLPALKVSDIEPKIPLTDLDITYAGDVPVQYCAQPTNGMVYFRAVSSLNTLPEELKPYVPLFCSVITKLGCGVYNYREQAQQMELTTGGMSVCPHIITDDSNLDTYEQGVVFSSLCLDRNLPDMMHLWSEIFNSPHFDDEERLRVLVRMSAQEMSNGIPDSGHVYASIRAGRTLTPAGELQELFSGMDQVKMIKRIAEMPEMGPILRKLSRIRKYVLLSDNMRCSVNATPQQMPVASKEIEHFLAGISRSKKERKSIRPHVVEKSSSPSSSGSEISRRATRKLVGDPTFKPCQMKTHFSLSFPVNYIGECVRTVPYTHPDYASLRILARIMTAKFLHGEIREKGGAYGGGAKLSFDGIFGFYSYRDPNSLSTLSTFQKAADWAKSGQFTQQDVDEAKLSVFSAVDSPIAPSDKGMNHFLHGISDEMKQKHREQLFAVTHSDLTNASNKYLTAGQCTRGTAILGPENRNIAKDPSWIIR.

The N-terminal 22 residues, 1-22 (MIRQCRAGLRLCRALYQTSYRW), are a transit peptide targeting the mitochondrion. His98 is a binding site for Zn(2+). The active-site Proton acceptor is Glu101. Zn(2+)-binding residues include His102 and Glu199. Residues Cys113 and Cys550 are joined by a disulfide bond. Residues 800-829 (KKERKSIRPHVVEKSSSPSSSGSEISRRAT) are disordered. Over residues 814-823 (SSSPSSSGSE) the composition is skewed to low complexity.

Belongs to the peptidase M16 family. PreP subfamily. Monomer and homodimer; homodimerization is induced by binding of the substrate. Zn(2+) serves as cofactor. A disulfide bond locks the enzyme in the closed conformation preventing substrate entry into the catalytic chamber.

It is found in the mitochondrion matrix. Mainly exists in a closed and catalytically competent conformation but a closed-to-open switch allows substrate entry into the catalytic chamber. Substrate binding induces closure and dimerization. A disulfide bond may lock the enzyme in a closed conformation preventing substrate entry into the catalytic chamber, participating in redox regulation of the enzyme. Inhibited by metal-chelating agents. Inhibited by nickel and zinc excess, and slightly activated by manganese. Metalloendopeptidase of the mitochondrial matrix that functions in peptide cleavage and degradation rather than in protein processing. Has an ATP-independent activity. Specifically cleaves peptides in the range of 5 to 65 residues. Shows a preference for cleavage after small polar residues and before basic residues, but without any positional preference. Degrades the transit peptides of mitochondrial proteins after their cleavage. Also degrades other unstructured peptides. The protein is Presequence protease, mitochondrial (pitrm1) of Xenopus tropicalis (Western clawed frog).